The following is a 240-amino-acid chain: ATP-dependent dethiobiotin synthetase BioD (240 aa).

ATP is bound at residue 15–20 (EIGKTF). A Mg(2+)-binding site is contributed by threonine 19. Residue lysine 40 is part of the active site. Residues aspartate 57, 118–121 (EGVG), and 178–179 (NR) contribute to the ATP site. Mg(2+) contacts are provided by aspartate 57 and glutamate 118.

It belongs to the dethiobiotin synthetase family. Homodimer. The cofactor is Mg(2+).

The protein resides in the cytoplasm. The enzyme catalyses (7R,8S)-7,8-diammoniononanoate + CO2 + ATP = (4R,5S)-dethiobiotin + ADP + phosphate + 3 H(+). The protein operates within cofactor biosynthesis; biotin biosynthesis; biotin from 7,8-diaminononanoate: step 1/2. Catalyzes a mechanistically unusual reaction, the ATP-dependent insertion of CO2 between the N7 and N8 nitrogen atoms of 7,8-diaminopelargonic acid (DAPA, also called 7,8-diammoniononanoate) to form a ureido ring. This is ATP-dependent dethiobiotin synthetase BioD from Burkholderia pseudomallei (strain K96243).